Reading from the N-terminus, the 469-residue chain is MSTSAAPVPAQPAHPRSILRGHKAQVHAAAFVRNNERLVTGDADGFVVVWDLTIMRPRAVWRAHDDVLLGIGGWGTDRLITHGRDNKLIVWQLREADEDSLAKTLPVDPAAEDRPKPWLLYMLEISTMNFCTFSLCEMSSDPLSEDREALIAVPNTLSSEAIDIFHLPSQKREHTIRLGQSEGMVMALELFRVDGYFTVAVGYENGVALVAQQAERSETPVGTWNVRYRSKAHTQPVLSLDVSLGRDFFLTSSADSLLIKHPIPPPQTSVLKTAREDGTTSEGANASVIDSQPPALASRPPDAPVAAPPATPGKPMSLLSAALAREAAGDSAESPTRRTTQPSDTPPESTLLSEPVKVVNTKHAGQQGLRIRSDGRIFATAGWDSRVRVYSCKTMKELAVLKWHQVGCFAVAFSTIDAPAGTQAEGARDGLAARMGDVTVKEKRISHAKSAHWLAAGSKDGKVSLWEIY.

3 WD repeats span residues 21–60 (GHKA…PRAV), 63–101 (AHDD…EDSL), and 232–271 (AHTQ…TSVL). Residues 260-354 (KHPIPPPQTS…TPPESTLLSE (95 aa)) form a disordered region. Polar residues predominate over residues 280-290 (TSEGANASVID). The span at 301–312 (PDAPVAAPPATP) shows a compositional bias: pro residues. Residues 313–332 (GKPMSLLSAALAREAAGDSA) are compositionally biased toward low complexity. The span at 333-352 (ESPTRRTTQPSDTPPESTLL) shows a compositional bias: polar residues. 2 WD repeats span residues 361 to 400 (TKHA…ELAV) and 437 to 469 (DVTV…WEIY).

It belongs to the WD repeat ASA1 family. As to quaternary structure, component of the ASTRA chromatin remodeling machinery complex.

The protein localises to the nucleus. Functionally, component of the ASTRA complex involved in chromatin remodeling. This is ASTRA-associated protein 1 (asa1) from Pyricularia oryzae (strain 70-15 / ATCC MYA-4617 / FGSC 8958) (Rice blast fungus).